The following is a 321-amino-acid chain: Ribosomal RNA small subunit methyltransferase H (321 aa).

S-adenosyl-L-methionine-binding positions include 42–44 (GGH), aspartate 62, phenylalanine 86, aspartate 107, and glutamine 114.

The protein belongs to the methyltransferase superfamily. RsmH family.

The protein localises to the cytoplasm. It catalyses the reaction cytidine(1402) in 16S rRNA + S-adenosyl-L-methionine = N(4)-methylcytidine(1402) in 16S rRNA + S-adenosyl-L-homocysteine + H(+). In terms of biological role, specifically methylates the N4 position of cytidine in position 1402 (C1402) of 16S rRNA. The chain is Ribosomal RNA small subunit methyltransferase H from Herminiimonas arsenicoxydans.